Reading from the N-terminus, the 323-residue chain is Phosphoribosylformylglycinamidine cyclo-ligase (323 aa).

This sequence belongs to the AIR synthase family.

Its subcellular location is the cytoplasm. It carries out the reaction 2-formamido-N(1)-(5-O-phospho-beta-D-ribosyl)acetamidine + ATP = 5-amino-1-(5-phospho-beta-D-ribosyl)imidazole + ADP + phosphate + H(+). Its pathway is purine metabolism; IMP biosynthesis via de novo pathway; 5-amino-1-(5-phospho-D-ribosyl)imidazole from N(2)-formyl-N(1)-(5-phospho-D-ribosyl)glycinamide: step 2/2. This Saccharolobus solfataricus (strain ATCC 35092 / DSM 1617 / JCM 11322 / P2) (Sulfolobus solfataricus) protein is Phosphoribosylformylglycinamidine cyclo-ligase.